Reading from the N-terminus, the 541-residue chain is Arginine--tRNA ligase (541 aa).

Positions Ala-119–His-129 match the 'HIGH' region motif.

This sequence belongs to the class-I aminoacyl-tRNA synthetase family. Monomer.

The protein resides in the cytoplasm. It carries out the reaction tRNA(Arg) + L-arginine + ATP = L-arginyl-tRNA(Arg) + AMP + diphosphate. This chain is Arginine--tRNA ligase, found in Helicobacter pylori (strain P12).